Consider the following 461-residue polypeptide: D-phenylhydantoinase (461 aa).

Histidine 59, histidine 61, and lysine 151 together coordinate a divalent metal cation. Lysine 151 is subject to N6-carboxylysine. Tyrosine 156 contributes to the substrate binding site. A divalent metal cation contacts are provided by histidine 182 and histidine 239. Serine 286 lines the substrate pocket. Residue aspartate 313 participates in a divalent metal cation binding. Residue asparagine 335 coordinates substrate.

It belongs to the metallo-dependent hydrolases superfamily. Hydantoinase/dihydropyrimidinase family. In terms of assembly, homotetramer. The cofactor is a divalent metal cation. Post-translationally, carboxylation allows a single lysine to coordinate two divalent metal cations.

It carries out the reaction D-5-phenylhydantoin + H2O = N-carbamoyl-D-phenylglycine + H(+). In terms of biological role, catalyzes the stereospecific hydrolysis of the cyclic amide bond of D-hydantoin derivatives with an aromatic side chains at the 5'-position. Has no activity on dihydropyrimidines. The physiological function is unknown. The polypeptide is D-phenylhydantoinase (Escherichia coli O127:H6 (strain E2348/69 / EPEC)).